A 402-amino-acid polypeptide reads, in one-letter code: Phosphomevalonate dehydratase large subunit (402 aa).

Positions 48, 49, 50, 79, and 80 each coordinate (R)-5-phosphomevalonate. C122 contributes to the [4Fe-4S] cluster binding site. (R)-5-phosphomevalonate-binding residues include E145 and S146. Residues C297 and C356 each contribute to the [4Fe-4S] cluster site. Residue K377 coordinates (R)-5-phosphomevalonate.

This sequence belongs to the AcnX type II large subunit family. In terms of assembly, heterodimer composed of a large subunit (PMDh-L) and a small subunit (PMDh-S). [4Fe-4S] cluster serves as cofactor.

The catalysed reaction is (R)-5-phosphomevalonate = (2E)-3-methyl-5-phosphooxypent-2-enoate + H2O. It functions in the pathway isoprenoid biosynthesis; isopentenyl diphosphate biosynthesis via mevalonate pathway. Its activity is regulated as follows. Neither the addition of 1 mM Mg(2+) nor 1 mM Mn(2+) has a significant effect on the activity, whereas Zn(2+) causes almost complete inactivation. Strongly inhibited by H(2)O(2), but not by EDTA or iodoacetamide. In terms of biological role, component of a hydro-lyase that catalyzes the dehydration of mevalonate 5-phosphate (MVA5P) to form trans-anhydromevalonate 5-phosphate (tAHMP). Involved in the archaeal mevalonate (MVA) pathway, which provides fundamental precursors for isoprenoid biosynthesis, such as isopentenyl diphosphate (IPP) and dimethylallyl diphosphate (DMAPP). The chain is Phosphomevalonate dehydratase large subunit from Aeropyrum pernix (strain ATCC 700893 / DSM 11879 / JCM 9820 / NBRC 100138 / K1).